Reading from the N-terminus, the 221-residue chain is Deoxyribose-phosphate aldolase (221 aa).

The Proton donor/acceptor role is filled by D90. K152 functions as the Schiff-base intermediate with acetaldehyde in the catalytic mechanism. K181 functions as the Proton donor/acceptor in the catalytic mechanism.

Belongs to the DeoC/FbaB aldolase family. DeoC type 1 subfamily.

It is found in the cytoplasm. It catalyses the reaction 2-deoxy-D-ribose 5-phosphate = D-glyceraldehyde 3-phosphate + acetaldehyde. It participates in carbohydrate degradation; 2-deoxy-D-ribose 1-phosphate degradation; D-glyceraldehyde 3-phosphate and acetaldehyde from 2-deoxy-alpha-D-ribose 1-phosphate: step 2/2. Its function is as follows. Catalyzes a reversible aldol reaction between acetaldehyde and D-glyceraldehyde 3-phosphate to generate 2-deoxy-D-ribose 5-phosphate. The sequence is that of Deoxyribose-phosphate aldolase from Syntrophotalea carbinolica (strain DSM 2380 / NBRC 103641 / GraBd1) (Pelobacter carbinolicus).